The chain runs to 551 residues: MRAFFLPFIQDALHKAGIETDKEIQIDKPNDKKFGDFSTNIAFLLAKEARKNPRELATQLIGLFAFPEGTVTKTEVAGPGFINFHLAPAFFMRSAQEVLTQGEKFGCTESGKGQKAIVEYVSANPTGPLTIGRGRGGVLGDCIANLLETQGYEVTREYYFNDAGRQMQILAESVRYRYLEKCGQTVEFPETHYQGDYIGEIAGTLFIEHSDELASSDELGIFKETAEAVIFSSIRRTLERIGITHDSFFNEHTLYQWNEGEASGNQKVIDALEAKDFIGRYDGATWFMTTKLGQEKDKVLIKSSGDPSYRLPDIAYHVTKFERGFDLMVNVFGADHIDEYPDVLEALKILGYDASKVKIAINQFVTTTVGGQTVKMSTRKGNADLLDDLIEDVGADATRLFFIMRSKDSHLNFDVELAKKQSKDNPVFYLQYAHARICSLVRLAEKEVGFDEAAATGASLPLLDSEPEIDLASALLDFPDVIQSCLRLLEPQKMVEYLHTVAERYHKFYQECPILKADENIRTARLELSLTVRQVLRNGFRILGISAPESM.

The short motif at 123 to 133 (ANPTGPLTIGR) is the 'HIGH' region element.

The protein belongs to the class-I aminoacyl-tRNA synthetase family. Monomer.

The protein localises to the cytoplasm. It carries out the reaction tRNA(Arg) + L-arginine + ATP = L-arginyl-tRNA(Arg) + AMP + diphosphate. This chain is Arginine--tRNA ligase, found in Chlorobaculum parvum (strain DSM 263 / NCIMB 8327) (Chlorobium vibrioforme subsp. thiosulfatophilum).